Here is a 965-residue protein sequence, read N- to C-terminus: MNTLSQAIKAYNSNDYELALKLFEKSAETYGRKIVEFQIIKCKEKLSTNSYVSEDKKNSVCDSSLDIATQLLLSNVKKLTLSESEKNSLKNKWKSITGKKSENAEIRKVELVPKDFPKDLVLAPLPDHVNDFTWYKNRKKSLGIKPVNKNIGLSIIIPTFNRSRILDITLACLVNQKTNYPFEVVVADDGSKENLLTIVQKYEQKLDIKYVRQKDYGYQLCAVRNLGLRTAKYDFVSILDCDMAPQQLWVHSYLTELLEDNDIVLIGPRKYVDTHNITAEQFLNDPYLIESLPETATNNNPSITSKGNISLDWRLEHFKKTDNLRLCDSPFRYFSCGNVAFSKEWLNKVGWFDEEFNHWGGEDVEFGYRLFAKGCFFRVIDGGMAYHQEPPGKENETDREAGKSITLKIVKEKVPYIYRKLLPIEDSHIHRIPLVSIYIPAYNCANYIQRCVDSALNQTVVDLEVCICNDGSTDNTLEVINKLYGNNPRVRIMSKPNGGIASASNAAVSFAKGYYIGQLDSDDYLEPDAVELCLKEFLKDKTLACVYTTNRNVNPDGSLIANGYNWPEFSREKLTTAMIAHHFRMFTIRAWHLTDGFNEKIENAVDYDMFLKLSEVGKFKHLNKICYNRVLHGDNTSIKNLDTQKKNHFVVVNQSLNRQRVSNYNYDEFDNLDESRKYIFNKTADYQEEIDILKDIKIVQRKDAKVAISIFYPNRLDGLVKKLNNIIEYNKNVLIIVLHIDKNHLTSDIKKEILEFHNKNQINILLNNDVSYYTNNRLIKTKAHLSNMNKLRQLNLNLEYIIFDNHDSLFIKNDSYNHIKKYDIGMNFSSLTNDWINKINAHSPFKNLIKKYFNDNDLKTINMKGASQGMFIKYTLAHDIATIMKEVITLCQSTDSVPEYNTEDIWFQFALLILEKKTGHVFNKTSTLTYMPWERKLQWTNEQIESAKRGENIPVNKFIINSITL.

A galactosaminyltransferase; A1 domain region spans residues 132–418 (FTWYKNRKKS…IVKEKVPYIY (287 aa)). UDP-N-acetyl-alpha-D-galactosamine is bound by residues proline 158, arginine 162, aspartate 189, tyrosine 218, arginine 224, and 240 to 241 (DC). Aspartate 242 serves as a coordination point for Mn(2+). 362 to 363 (ED) is a UDP-N-acetyl-alpha-D-galactosamine binding site. Mn(2+) is bound at residue histidine 387. The segment at 419–683 (RKLLPIEDSH…ESRKYIFNKT (265 aa)) is glucuronosyltransferase; A2 domain. UDP-alpha-D-glucuronate is bound by residues tyrosine 442, aspartate 470, and 518-521 (QLDS). Mn(2+) is bound at residue aspartate 522. UDP-alpha-D-glucuronate is bound by residues histidine 582 and 604–605 (AV). Residue histidine 632 participates in Mn(2+) binding.

It belongs to the glycosyltransferase 2 family. CS/HAS subfamily. The cofactor is Mn(2+).

It is found in the cell membrane. The enzyme catalyses 3-O-(beta-D-GlcA-(1-&gt;3)-beta-D-GalNAc-(1-&gt;4)-beta-D-GlcA-(1-&gt;3)-beta-D-Gal-(1-&gt;3)-beta-D-Gal-(1-&gt;4)-beta-D-Xyl)-L-seryl-[protein] + UDP-N-acetyl-alpha-D-galactosamine = 3-O-(beta-D-GalNAc-(1-&gt;4)-beta-D-GlcA-(1-&gt;3)-beta-D-GalNAc-(1-&gt;4)-beta-D-GlcA-(1-&gt;3)-beta-D-Gal-(1-&gt;3)-beta-D-Gal-(1-&gt;4)-beta-D-Xyl)-L-seryl-[protein] + UDP + H(+). It catalyses the reaction 3-O-{beta-D-GlcA-(1-&gt;3)-[beta-D-GalNAc-(1-&gt;4)-beta-D-GlcA-(1-&gt;3)](n)-beta-D-GalNAc-(1-&gt;4)-beta-D-GlcA-(1-&gt;3)-beta-D-Gal-(1-&gt;3)-beta-D-Gal-(1-&gt;4)-beta-D-Xyl}-L-seryl-[protein] + UDP-N-acetyl-alpha-D-galactosamine = 3-O-{[beta-D-GalNAc-(1-&gt;4)-beta-D-GlcA-(1-&gt;3)](n+1)-beta-D-GalNAc-(1-&gt;4)-beta-D-GlcA-(1-&gt;3)-beta-D-Gal-(1-&gt;3)-beta-D-Gal-(1-&gt;4)-beta-D-Xyl}-L-seryl-[protein] + UDP + H(+). It carries out the reaction 3-O-(beta-D-GalNAc-(1-&gt;4)-beta-D-GlcA-(1-&gt;3)-beta-D-Gal-(1-&gt;3)-beta-D-Gal-(1-&gt;4)-beta-D-Xyl)-L-seryl-[protein] + UDP-alpha-D-glucuronate = 3-O-(beta-D-GlcA-(1-&gt;3)-beta-D-GalNAc-(1-&gt;4)-beta-D-GlcA-(1-&gt;3)-beta-D-Gal-(1-&gt;3)-beta-D-Gal-(1-&gt;4)-beta-D-Xyl)-L-seryl-[protein] + UDP + H(+). The catalysed reaction is 3-O-{[beta-D-GalNAc-(1-&gt;4)-beta-D-GlcA-(1-&gt;3)](n)-beta-D-GalNAc-(1-&gt;4)-beta-D-GlcA-(1-&gt;3)-beta-D-Gal-(1-&gt;3)-beta-D-Gal-(1-&gt;4)-beta-D-Xyl}-L-seryl-[protein] + UDP-alpha-D-glucuronate = 3-O-{beta-D-GlcA-(1-&gt;3)-[beta-D-GalNAc-(1-&gt;4)-beta-D-GlcA-(1-&gt;3)](n)-beta-D-GalNAc-(1-&gt;4)-beta-D-GlcA-(1-&gt;3)-beta-D-Gal-(1-&gt;3)-beta-D-Gal-(1-&gt;4)-beta-D-Xyl}-L-seryl-[protein] + UDP + H(+). Functionally, glycosyltransferase that catalyzes elongation of chondroitin, a polysaccharide composed of a repeating disaccharide of N-acetylgalactosamine (GalNAc) and glucuronic acid (GlcUA) units, by alternatively transferring the GlcUA and GalNAc moiety from UDP-GlcUA and UDP-GalNAc to the non-reducing ends of the chondroitin chain. Each chondroitin unit has the composition beta-(1-&gt;4)-GlcUA-beta-(1-&gt;3)-GalNAc. The polypeptide is Chondroitin synthase (fcbD) (Pasteurella multocida (strain Pm70)).